We begin with the raw amino-acid sequence, 585 residues long: Cytidine monophosphate-N-acetylneuraminic acid hydroxylase (585 aa).

In terms of domain architecture, Rieske spans 9–107 (LSPVEVANLK…VEMDENNRLL (99 aa)). Positions 49, 51, 70, and 73 each coordinate [2Fe-2S] cluster.

It belongs to the CMP-Neu5Ac hydroxylase family. Requires [2Fe-2S] cluster as cofactor.

The protein resides in the cytoplasm. It carries out the reaction CMP-N-acetyl-beta-neuraminate + 2 Fe(II)-[cytochrome b5] + O2 + 2 H(+) = CMP-N-glycoloyl-beta-neuraminate + 2 Fe(III)-[cytochrome b5] + H2O. Its pathway is amino-sugar metabolism; N-acetylneuraminate metabolism. Functionally, sialic acids are components of carbohydrate chains of glycoconjugates and are involved in cell-cell recognition and cell-pathogen interactions. Catalyzes the conversion of CMP-N-acetylneuraminic acid (CMP-Neu5Ac) into its hydroxylated derivative CMP-N-glycolylneuraminic acid (CMP-Neu5Gc), a sialic acid abundantly expressed at the surface of many cells. The polypeptide is Cytidine monophosphate-N-acetylneuraminic acid hydroxylase (CMAH) (Pongo pygmaeus (Bornean orangutan)).